Reading from the N-terminus, the 598-residue chain is Mitogen-activated protein kinase 19 (598 aa).

Residues 25–316 form the Protein kinase domain; the sequence is YRILEVIGKG…AAEALADPYF (292 aa). ATP-binding positions include 31 to 39 and Lys-54; that span reads IGKGSYGVV. Asp-151 acts as the Proton acceptor in catalysis. A Phosphothreonine modification is found at Thr-187. The TXY signature appears at 187–189; sequence TDY. Phosphotyrosine is present on Tyr-189. The residue at position 192 (Thr-192) is a Phosphothreonine. Residues 396-486 are disordered; that stretch reads GKSGPVIPPD…VTYENDRNLK (91 aa). A compositionally biased stretch (low complexity) spans 414–425; that stretch reads SAVHSSAVNSNA.

Belongs to the protein kinase superfamily. CMGC Ser/Thr protein kinase family. MAP kinase subfamily. Dually phosphorylated on Thr-187 and Tyr-189, which activates the enzyme.

The catalysed reaction is L-seryl-[protein] + ATP = O-phospho-L-seryl-[protein] + ADP + H(+). It catalyses the reaction L-threonyl-[protein] + ATP = O-phospho-L-threonyl-[protein] + ADP + H(+). Activated by threonine and tyrosine phosphorylation. In Arabidopsis thaliana (Mouse-ear cress), this protein is Mitogen-activated protein kinase 19 (MPK19).